A 279-amino-acid chain; its full sequence is ATP synthase gamma chain (279 aa).

This sequence belongs to the ATPase gamma chain family. As to quaternary structure, F-type ATPases have 2 components, CF(1) - the catalytic core - and CF(0) - the membrane proton channel. CF(1) has five subunits: alpha(3), beta(3), gamma(1), delta(1), epsilon(1). CF(0) has three main subunits: a, b and c.

Its subcellular location is the cell membrane. Produces ATP from ADP in the presence of a proton gradient across the membrane. The gamma chain is believed to be important in regulating ATPase activity and the flow of protons through the CF(0) complex. This is ATP synthase gamma chain from Mycoplasma genitalium (strain ATCC 33530 / DSM 19775 / NCTC 10195 / G37) (Mycoplasmoides genitalium).